The chain runs to 295 residues: uncharacterized protein (295 aa).

The region spanning 4 to 233 is the Sigma-54 factor interaction domain; it reads IVVKSMAMEK…LQNTIERLVL (230 aa).

This is an uncharacterized protein from Pseudomonas sp. (strain NS671).